The primary structure comprises 540 residues: Sterol O-acyltransferase 1 (540 aa).

The interval 1–20 (MSLRNRLSKSGENPEQDEAQ) is disordered. Residues 1–128 (MSLRNRLSKS…LDELFEVDHI (128 aa)) are Cytoplasmic-facing. Ser2 is subject to Phosphoserine. His127 is a cholesterol binding site. The chain crosses the membrane as a helical span at residues 129-150 (RTIYHMFIALLILFVLSTIVVD). Residues 151 to 170 (YIDEGRLVLEFNLLAYAFGK) are Lumenal-facing. The chain crosses the membrane as a helical span at residues 171 to 196 (FPTVIWTWWAMFLSTLSIPYFLFQRW). The Cytoplasmic segment spans residues 197-208 (AHGYSKSSHPLI). A helical transmembrane segment spans residues 209 to 234 (YSLVHGLLFLVFQLGVLGFVPTYVVL). At 235-242 (AYTLPPAS) the chain is on the lumenal side. Residues 243 to 266 (RFILILEQIRLIMKAHSFVRENIP) traverse the membrane as a helical segment. Over 267–309 (RVLNAAKEKSSKDPLPTVNQYLYFLFAPTLIYRDNYPRTPTVR) the chain is Cytoplasmic. Residues 310–342 (WGYVAMQFLQVFGCLFYVYYIFERLCAPLFRNI) traverse the membrane as a helical segment. At 343–359 (KQEPFSARVLVLCVFNS) the chain is on the lumenal side. Residues 360 to 385 (ILPGVLILFLSFFAFLHCWLNAFAEM) form a helical membrane-spanning segment. The Cytoplasmic segment spans residues 386 to 433 (LRFGDRMFYKDWWNSTSYSNYYRTWNVVVHDWLYYYVYKDLLWFFSKR). An FYXDWWN motif motif is present at residues 393 to 399 (FYKDWWN). Residues Asn405, Arg408, Asn411, His415, Tyr423, Lys435, and Ser446 each contribute to the an acyl-CoA site. Residues 434 to 458 (FKSAAMLAVFALSAVVHEYALAICL) form a helical membrane-spanning segment. The active site involves His450. Residues 459–464 (SYFYPV) are Lumenal-facing. A helical membrane pass occupies residues 465–480 (LFVLFMFFGMAFNFIV). Over 481 to 486 (NDSRKR) the chain is Cytoplasmic. The chain crosses the membrane as a helical span at residues 487–518 (PIWNIMVWASLFLGYGLILCFYSQEWYARQHC). Cysteines 518 and 536 form a disulfide. The Lumenal portion of the chain corresponds to 519 to 540 (PLKNPTFLDYVRPRTWTCRYVF).

This sequence belongs to the membrane-bound acyltransferase family. Sterol o-acyltransferase subfamily. In terms of assembly, may form homo- or heterodimers. Interacts with UBIAD1.

It is found in the endoplasmic reticulum membrane. It carries out the reaction a sterol + a long-chain fatty acyl-CoA = a long-chain 3-hydroxysterol ester + CoA. The catalysed reaction is cholesterol + an acyl-CoA = a cholesterol ester + CoA. It catalyses the reaction cholesterol + (9Z)-octadecenoyl-CoA = cholesteryl (9Z-octadecenoate) + CoA. The enzyme catalyses cholesterol + hexadecanoyl-CoA = cholesteryl hexadecanoate + CoA. It carries out the reaction octadecanoyl-CoA + cholesterol = cholesteryl octadecanoate + CoA. The catalysed reaction is (9Z,12Z)-octadecadienoyl-CoA + cholesterol = cholesteryl (9Z,12Z)-octadecadienoate + CoA. It catalyses the reaction (5Z,8Z,11Z,14Z)-eicosatetraenoyl-CoA + cholesterol = cholesteryl (5Z,8Z,11Z,14Z)-eicosatetraenoate + CoA. The enzyme catalyses (9Z)-hexadecenoyl-CoA + cholesterol = cholesteryl (9Z)-hexadecenoate + CoA. It carries out the reaction (11Z)-octadecenoyl-CoA + cholesterol = cholesteryl (11Z)-octadecenoate + CoA. The catalysed reaction is (7Z)-octadecenoyl-CoA + cholesterol = cholesteryl (7Z)-octadecenoate + CoA. Its function is as follows. Catalyzes the formation of fatty acid-cholesterol esters, which are less soluble in membranes than cholesterol. Plays a role in lipoprotein assembly and dietary cholesterol absorption. Preferentially utilizes oleoyl-CoA ((9Z)-octadecenoyl-CoA) as a substrate: shows a higher activity towards an acyl-CoA substrate with a double bond at the delta-9 position (9Z) than towards saturated acyl-CoA or an unsaturated acyl-CoA with a double bond at the delta-7 (7Z) or delta-11 (11Z) positions. The chain is Sterol O-acyltransferase 1 from Mus musculus (Mouse).